A 163-amino-acid polypeptide reads, in one-letter code: Probable ribosome biogenesis protein RLP24 (163 aa).

This sequence belongs to the eukaryotic ribosomal protein eL24 family. In terms of assembly, associated with nucleolar and cytoplasmic pre-60S particles. At the end of biogenesis it dissociates from cytoplasmic pre-60S particles and is likely to be exchanged for its ribosomal homolog, RPL24.

Its subcellular location is the nucleus. It is found in the nucleolus. Functionally, involved in the biogenesis of the 60S ribosomal subunit. Ensures the docking of GTPBP4/NOG1 to pre-60S particles. The protein is Probable ribosome biogenesis protein RLP24 (RSL24D1) of Pongo abelii (Sumatran orangutan).